Here is a 289-residue protein sequence, read N- to C-terminus: Probable ABC transporter permease protein BruAb2_0483 (289 aa).

6 consecutive transmembrane segments (helical) span residues 9 to 29 (FLILPSLLLAAVVIFWPVVHL), 70 to 90 (VWTVAVVGGALVLSIPVAIIL), 99 to 119 (VARVIIMLPWAVSLTMTAIFW), 144 to 166 (IQWLASAATAFPMQILVGILVTV), 213 to 233 (IAIVLNTIYVFNSFPIIWVMT), and 258 to 278 (FGEASAVSLIMLAILLVFTVI). The region spanning 65-279 (LWRTAVWTVA…AILLVFTVIY (215 aa)) is the ABC transmembrane type-1 domain.

The protein belongs to the binding-protein-dependent transport system permease family. In terms of assembly, the complex is composed of two ATP-binding proteins (BruAb2_0487), two transmembrane proteins (BruAb2_0483) and a solute-binding protein (BruAb2_0484).

It localises to the cell inner membrane. Its function is as follows. Probably part of an ABC transporter complex. Probably responsible for the translocation of the substrate across the membrane. This chain is Probable ABC transporter permease protein BruAb2_0483, found in Brucella abortus biovar 1 (strain 9-941).